Here is a 54-residue protein sequence, read N- to C-terminus: Sec-independent protein translocase protein TatA (54 aa).

A helical membrane pass occupies residues 1–21 (MGMSFSHLLIVLLIIFVLFGA).

This sequence belongs to the TatA/E family. As to quaternary structure, the Tat system comprises two distinct complexes: a TatABC complex, containing multiple copies of TatA, TatB and TatC subunits, and a separate TatA complex, containing only TatA subunits. Substrates initially bind to the TatABC complex, which probably triggers association of the separate TatA complex to form the active translocon.

The protein localises to the cell inner membrane. Part of the twin-arginine translocation (Tat) system that transports large folded proteins containing a characteristic twin-arginine motif in their signal peptide across membranes. TatA could form the protein-conducting channel of the Tat system. The protein is Sec-independent protein translocase protein TatA of Rickettsia prowazekii (strain Madrid E).